A 490-amino-acid polypeptide reads, in one-letter code: Protein nucleotidyltransferase YdiU (490 aa).

ATP is bound by residues Gly89, Gly91, Arg92, Lys112, Asp124, Gly125, Arg175, and Arg182. The active-site Proton acceptor is Asp251. 2 residues coordinate Mg(2+): Asn252 and Asp261. Asp261 serves as a coordination point for ATP.

It belongs to the SELO family. Mg(2+) serves as cofactor. It depends on Mn(2+) as a cofactor.

It carries out the reaction L-seryl-[protein] + ATP = 3-O-(5'-adenylyl)-L-seryl-[protein] + diphosphate. The enzyme catalyses L-threonyl-[protein] + ATP = 3-O-(5'-adenylyl)-L-threonyl-[protein] + diphosphate. It catalyses the reaction L-tyrosyl-[protein] + ATP = O-(5'-adenylyl)-L-tyrosyl-[protein] + diphosphate. The catalysed reaction is L-histidyl-[protein] + UTP = N(tele)-(5'-uridylyl)-L-histidyl-[protein] + diphosphate. It carries out the reaction L-seryl-[protein] + UTP = O-(5'-uridylyl)-L-seryl-[protein] + diphosphate. The enzyme catalyses L-tyrosyl-[protein] + UTP = O-(5'-uridylyl)-L-tyrosyl-[protein] + diphosphate. Functionally, nucleotidyltransferase involved in the post-translational modification of proteins. It can catalyze the addition of adenosine monophosphate (AMP) or uridine monophosphate (UMP) to a protein, resulting in modifications known as AMPylation and UMPylation. The sequence is that of Protein nucleotidyltransferase YdiU from Vibrio vulnificus (strain YJ016).